A 1109-amino-acid polypeptide reads, in one-letter code: Protein translocase subunit SecA (1109 aa).

ATP-binding positions include Q175, G193 to T197, and D695. Positions V1038–S1109 are disordered. 2 stretches are compositionally biased toward basic and acidic residues: residues Q1045–L1059 and D1071–G1088. Positions 1093, 1095, 1104, and 1105 each coordinate Zn(2+). Positions K1099–S1109 are enriched in basic residues.

Belongs to the SecA family. Monomer and homodimer. Part of the essential Sec protein translocation apparatus which comprises SecA, SecYEG and auxiliary proteins SecDF. Other proteins may also be involved. Zn(2+) is required as a cofactor.

It is found in the cell inner membrane. It localises to the cytoplasm. It carries out the reaction ATP + H2O + cellular proteinSide 1 = ADP + phosphate + cellular proteinSide 2.. Its function is as follows. Part of the Sec protein translocase complex. Interacts with the SecYEG preprotein conducting channel. Has a central role in coupling the hydrolysis of ATP to the transfer of proteins into and across the cell membrane, serving as an ATP-driven molecular motor driving the stepwise translocation of polypeptide chains across the membrane. The polypeptide is Protein translocase subunit SecA (Bacteroides fragilis (strain ATCC 25285 / DSM 2151 / CCUG 4856 / JCM 11019 / LMG 10263 / NCTC 9343 / Onslow / VPI 2553 / EN-2)).